Consider the following 435-residue polypeptide: Proline and serine-rich protein 2 (435 aa).

Basic and acidic residues predominate over residues 1 to 10 (MPVTHRKSDA). The segment at 1 to 22 (MPVTHRKSDASDMNSDTSPSCR) is disordered. The residue at position 8 (S8) is a Phosphoserine. Positions 11–20 (SDMNSDTSPS) are enriched in polar residues. S43 carries the phosphoserine modification. Position 45 is a phosphothreonine (T45). Low complexity-rich tracts occupy residues 92-102 (PSLEESTSSPS) and 113-126 (PAPG…LPEG). 2 disordered regions span residues 92 to 276 (PSLE…RAAV) and 295 to 420 (AFPA…SEEA). T146 is subject to Phosphothreonine. Residues 146–169 (TPPPPDPPAPETLLAPPPLPSTPD) are compositionally biased toward pro residues. S166 is modified (phosphoserine). T167 carries the post-translational modification Phosphothreonine. A phosphoserine mark is found at S179, S212, and S215. The segment covering 228–237 (PAARGPRSGD) has biased composition (low complexity). R252 bears the Asymmetric dimethylarginine; alternate mark. R252 is modified (omega-N-methylarginine; alternate). A compositionally biased stretch (gly residues) spans 302 to 311 (AGEGAPGGGS). Residue S312 is modified to Phosphoserine. Position 320 is an omega-N-methylarginine; alternate (R320). R320 carries the dimethylated arginine; alternate modification. Residue R378 is modified to Omega-N-methylarginine. A Phosphoserine modification is found at S400. R414 is modified (omega-N-methylarginine).

This is Proline and serine-rich protein 2 (PROSER2) from Homo sapiens (Human).